The chain runs to 254 residues: Flagellar L-ring protein 1 (254 aa).

Positions 1-26 (MSPFSSAFRPRRIAISALLLAIGALA) are cleaved as a signal peptide.

Belongs to the FlgH family. In terms of assembly, the basal body constitutes a major portion of the flagellar organelle and consists of four rings (L,P,S, and M) mounted on a central rod.

Its subcellular location is the cell outer membrane. The protein localises to the bacterial flagellum basal body. Functionally, assembles around the rod to form the L-ring and probably protects the motor/basal body from shearing forces during rotation. The sequence is that of Flagellar L-ring protein 1 (flgH1) from Bradyrhizobium diazoefficiens (strain JCM 10833 / BCRC 13528 / IAM 13628 / NBRC 14792 / USDA 110).